The following is a 212-amino-acid chain: NADH dehydrogenase [ubiquinone] iron-sulfur protein 8, mitochondrial (212 aa).

The N-terminal 36 residues, 1 to 36 (MRCLTMPMLLRALAQAQAARAGHASVRGLHSSAVAA), are a transit peptide targeting the mitochondrion. 2 4Fe-4S ferredoxin-type domains span residues 104–133 (RRYPSGEERCIACKLCEAVCPAQAITIEAE) and 143–172 (TRYDIDMTKCIYCGFCQEACPVDAIVEGPN). Residues Cys-113, Cys-116, Cys-119, Cys-123, Cys-152, Cys-155, Cys-158, and Cys-162 each contribute to the [4Fe-4S] cluster site.

Belongs to the complex I 23 kDa subunit family. As to quaternary structure, core subunit of respiratory chain NADH dehydrogenase (Complex I) which is composed of 45 different subunits. This is a component of the iron-sulfur (IP) fragment of the enzyme. Interacts with RAB5IF. It depends on [4Fe-4S] cluster as a cofactor.

The protein localises to the mitochondrion inner membrane. It catalyses the reaction a ubiquinone + NADH + 5 H(+)(in) = a ubiquinol + NAD(+) + 4 H(+)(out). Functionally, core subunit of the mitochondrial membrane respiratory chain NADH dehydrogenase (Complex I) which catalyzes electron transfer from NADH through the respiratory chain, using ubiquinone as an electron acceptor. Essential for the catalytic activity and assembly of complex I. This is NADH dehydrogenase [ubiquinone] iron-sulfur protein 8, mitochondrial (NDUFS8) from Bos taurus (Bovine).